The following is a 369-amino-acid chain: Fructose-bisphosphate aldolase (369 aa).

Asp40 is a binding site for dihydroxyacetone phosphate. Positions 42 and 45 each coordinate D-glyceraldehyde 3-phosphate. Residue Arg49 coordinates beta-D-fructose 1,6-bisphosphate. Lys113 is a binding site for D-glyceraldehyde 3-phosphate. Lys152 contacts dihydroxyacetone phosphate. Glu195 provides a ligand contact to D-glyceraldehyde 3-phosphate. Glu195 (proton acceptor) is an active-site residue. Residues Lys237, Ser279, and Gly280 each contribute to the dihydroxyacetone phosphate site. Residue Lys237 is the Schiff-base intermediate with dihydroxyacetone phosphate of the active site. Beta-D-fructose 1,6-bisphosphate contacts are provided by residues 279-281 (SGG) and Ser307. 2 residues coordinate dihydroxyacetone phosphate: Gly309 and Arg310. Residue Arg310 participates in beta-D-fructose 1,6-bisphosphate binding.

The protein belongs to the class I fructose-bisphosphate aldolase family. In terms of assembly, homotetramer. Interacts with TRAP (via cytoplasmic domain); the interaction prevents substrate binding and thereby inhibits aldolase activity. Interacts with MTRAP (via cytoplasmic domain); MTRAP phosphorylation may increase the binding to FBPA. Interact with RH1 (via cytoplasmic domain). Interacts with RH2b (via cytoplasmic domain). Interacts with RH4 (via cytoplasmic domain). Interacts with AMA1 (via cytoplasmic domain); the interaction is weak, however it may be increased upon AMA1 phosphorylation. Interacts with EBA140 (via cytoplasmic domain); the interaction is weak. Interacts with EBA175 (via cytoplasmic domain); the interaction is weak. Interacts with EBA181 (via cytoplasmic domain); the interaction is weak. Interacts with G-actin and F-actin. May interact with ACT2/actin II; the interaction inhibits FBPA catalytic activity. Interacts with human SLC4A1/band 3 (via N-terminus); the interaction inhibits FBPA catalytic activity.

Its subcellular location is the cytoplasm. The protein localises to the membrane. It localises to the host cell membrane. It catalyses the reaction beta-D-fructose 1,6-bisphosphate = D-glyceraldehyde 3-phosphate + dihydroxyacetone phosphate. It participates in carbohydrate degradation; glycolysis; D-glyceraldehyde 3-phosphate and glycerone phosphate from D-glucose: step 4/4. The cytoplasmic tail of TRAP and probably other adhesins acts as a competitive inhibitor as the binding sites of the glycolytic substrate fructose 1,6-bisphosphate and TRAP partially overlap. In terms of biological role, plays a key role in glycolysis by catalyzing the cleavage of fructose 1,6-bisphosphate into dihydroxyacetone phosphate and glyceraldehyde 3-phosphate. Independently of its catalytic activity, connects the actin filaments, and thus the actomyosin motor, to cell surface adhesins of the thrombospondin-related anonymous protein (TRAP), the erythrocyte binding ligand (EBL) and reticulocyte binding homolog (RH) protein families; this interaction is probably involved in transducing the motor force across the parasite surface required for sporozoite and ookinete gliding motility and merozoite invasion. Stimulates actin polymerisation. The protein is Fructose-bisphosphate aldolase of Plasmodium falciparum (isolate 3D7).